The sequence spans 1040 residues: Multidrug resistance protein MdtB (1040 aa).

12 helical membrane-spanning segments follow: residues 16 to 36 (FIMR…AGII), 347 to 367 (LMMA…NIPA), 369 to 389 (IIPG…MVFL), 396 to 416 (LTLM…IVVI), 440 to 460 (IGFT…PLLF), 472 to 492 (FAIT…TLTP), 537 to 557 (WLTL…WVFI), 863 to 883 (LGST…VLGI), 888 to 908 (FIHP…ALLA), 911 to 931 (IAGS…IGIV), 968 to 988 (ILMT…STGV), and 998 to 1018 (IGMV…TPVI).

The protein belongs to the resistance-nodulation-cell division (RND) (TC 2.A.6) family. MdtB subfamily. As to quaternary structure, part of a tripartite efflux system composed of MdtA, MdtB and MdtC. MdtB forms a heteromultimer with MdtC.

The protein resides in the cell inner membrane. In terms of biological role, the MdtABC tripartite complex confers resistance against novobiocin and deoxycholate. In Escherichia coli O7:K1 (strain IAI39 / ExPEC), this protein is Multidrug resistance protein MdtB.